The primary structure comprises 693 residues: Transcription activator of gluconeogenesis BC1G_14637 (693 aa).

Residues 1 to 12 (MSGETEIDDPEV) are compositionally biased toward acidic residues. The interval 1–75 (MSGETEIDDP…KFDPKDPLRP (75 aa)) is disordered. Positions 21-49 (YSDHEQELDVIGKEGDNQEMAEQKVRPDG) are enriched in basic and acidic residues. Residues 52–62 (NGNTVGATATV) are compositionally biased toward polar residues. Basic and acidic residues predominate over residues 65–74 (PKFDPKDPLR). A DNA-binding region (zn(2)-C6 fungal-type) is located at residues 84–112 (CFACQRAHLTCGDERPCQRCIKRGLADAC). Composition is skewed to polar residues over residues 144-155 (SSNRATAASTPT) and 275-287 (SAET…SAGM). Disordered stretches follow at residues 144 to 170 (SSNR…QPDT), 273 to 299 (SGSA…FSNN), 350 to 413 (TSGS…RNRD), and 531 to 567 (NLNT…DSNP). The segment covering 356–367 (SPSTDASPAAST) has biased composition (low complexity). Residues 369–379 (GFESSPTTTNY) are compositionally biased toward polar residues. Residues 394 to 408 (KSGPSGKLGPSGILG) show a composition bias toward low complexity.

This sequence belongs to the ERT1/acuK family.

It is found in the nucleus. Functionally, transcription factor which regulates nonfermentable carbon utilization. Activator of gluconeogenetic genes. This Botryotinia fuckeliana (strain B05.10) (Noble rot fungus) protein is Transcription activator of gluconeogenesis BC1G_14637.